Consider the following 157-residue polypeptide: Small ribosomal subunit protein uS7 (157 aa).

It belongs to the universal ribosomal protein uS7 family. In terms of assembly, part of the 30S ribosomal subunit. Contacts proteins S9 and S11.

One of the primary rRNA binding proteins, it binds directly to 16S rRNA where it nucleates assembly of the head domain of the 30S subunit. Is located at the subunit interface close to the decoding center, probably blocks exit of the E-site tRNA. The polypeptide is Small ribosomal subunit protein uS7 (Polaromonas naphthalenivorans (strain CJ2)).